The sequence spans 88 residues: Large ribosomal subunit protein bL27 (88 aa).

Residues 1 to 25 (MAHKKAGGSSRNGRDSPGQRRGIKR) form a disordered region.

The protein belongs to the bacterial ribosomal protein bL27 family.

The chain is Large ribosomal subunit protein bL27 (rpmA) from Lawsonia intracellularis.